Consider the following 320-residue polypeptide: tRNA pseudouridine synthase B (320 aa).

Asp49 serves as the catalytic Nucleophile.

This sequence belongs to the pseudouridine synthase TruB family. Type 1 subfamily.

It catalyses the reaction uridine(55) in tRNA = pseudouridine(55) in tRNA. Responsible for synthesis of pseudouridine from uracil-55 in the psi GC loop of transfer RNAs. The chain is tRNA pseudouridine synthase B from Bartonella tribocorum (strain CIP 105476 / IBS 506).